The sequence spans 187 residues: UPF0340 protein SPG_0604 (187 aa).

The protein belongs to the UPF0340 family.

This chain is UPF0340 protein SPG_0604, found in Streptococcus pneumoniae serotype 19F (strain G54).